Consider the following 544-residue polypeptide: MPVITLQYDDLEKLTGTDKETIIKRAPMIGADIERVEEESIDIEFFPDRPDLYSVEGAARAMRGFLDLETGLSKYEIKPPKVSISVSEKILRIRPFLGCAVVRGIKFTSSSIKSLMDLQEDLHWGLGRNRKKVSIGVHDLSNVKPPFRYMAVDPGFKFVPLDYTEKMSMTEILEKHPKGTRFAHLVRGFKKYPIILDSDDNVLSFPPIINGTLTSVTESTTDLFIDVTGLGEAVYTALNIVVTALAERGGQIEFVKVVRPDSGELILPDLEPKTRFLTKTEVRDLLGMELSIEEIVKQLERMRFGAKALDEETIEVKVPAYRADILHNYDLVEDIAKGYGYENIKVKIPETYTPGKSHPISLLRAPVNEIMVGLGYYEVMPFTLTSEKINFENMRRQKTDDVTYVLHPISEDQTMIRTTLLPNLLEILALNQHRELPQKIFEFGEVVNNEITGQHVAAVSIHPQANFTEIYEVVDALMREMMLPYEVKESEDPAFLEGRRADVYVNGKKLGVFGEFHPEVINNFALGYAVVGFELDLNDLIGQS.

Residues 270–346 (LEPKTRFLTK…KGYGYENIKV (77 aa)) enclose the B5 domain. 4 residues coordinate Mg(2+): Asp324, Asp330, Glu333, and Asp334.

The protein belongs to the phenylalanyl-tRNA synthetase beta subunit family. Type 2 subfamily. As to quaternary structure, tetramer of two alpha and two beta subunits. Mg(2+) is required as a cofactor.

It localises to the cytoplasm. The catalysed reaction is tRNA(Phe) + L-phenylalanine + ATP = L-phenylalanyl-tRNA(Phe) + AMP + diphosphate + H(+). In Methanosarcina barkeri (strain Fusaro / DSM 804), this protein is Phenylalanine--tRNA ligase beta subunit.